A 669-amino-acid chain; its full sequence is DNA ligase (669 aa).

NAD(+)-binding positions include 34–38, 83–84, and Glu114; these read DAEYD and SL. Residue Lys116 is the N6-AMP-lysine intermediate of the active site. Residues Arg137, Glu171, Lys287, and Lys311 each coordinate NAD(+). Zn(2+) contacts are provided by Cys405, Cys408, Cys423, and Cys428. A BRCT domain is found at 591–669; that stretch reads NVESYFAGKT…EERFLQELNK (79 aa).

Belongs to the NAD-dependent DNA ligase family. LigA subfamily. The cofactor is Mg(2+). It depends on Mn(2+) as a cofactor.

It carries out the reaction NAD(+) + (deoxyribonucleotide)n-3'-hydroxyl + 5'-phospho-(deoxyribonucleotide)m = (deoxyribonucleotide)n+m + AMP + beta-nicotinamide D-nucleotide.. Its function is as follows. DNA ligase that catalyzes the formation of phosphodiester linkages between 5'-phosphoryl and 3'-hydroxyl groups in double-stranded DNA using NAD as a coenzyme and as the energy source for the reaction. It is essential for DNA replication and repair of damaged DNA. The sequence is that of DNA ligase from Bacillus cereus (strain B4264).